A 226-amino-acid polypeptide reads, in one-letter code: Vacuolar protein sorting-associated protein 20 (226 aa).

Gly-2 is lipidated: N-myristoyl glycine.

The protein belongs to the SNF7 family. In terms of assembly, component of the endosomal sorting required for transport complex III (ESCRT-III).

The protein resides in the endosome membrane. It localises to the vacuole membrane. The protein localises to the cytoplasm. Its subcellular location is the cell cortex. Its function is as follows. Class E VPS protein implicated in concentration and sorting of cargo proteins of the multivesicular body (MVB) for incorporation into intralumenal vesicles. The lumenal sequestrated membrane proteins will be targeted into the vacuole after fusion of the endosome with the vacuole. This Schizosaccharomyces pombe (strain 972 / ATCC 24843) (Fission yeast) protein is Vacuolar protein sorting-associated protein 20 (vps20).